Here is a 342-residue protein sequence, read N- to C-terminus: L-threonine 3-dehydrogenase (342 aa).

Position 38 (cysteine 38) interacts with Zn(2+). Residues threonine 40 and histidine 43 each act as charge relay system in the active site. The Zn(2+) site is built by histidine 63, glutamate 64, cysteine 93, cysteine 96, cysteine 99, and cysteine 107. NAD(+) contacts are provided by residues isoleucine 175, aspartate 195, arginine 200, 262–264, and 286–287; these read LGI and IY.

The protein belongs to the zinc-containing alcohol dehydrogenase family. In terms of assembly, homotetramer. The cofactor is Zn(2+).

It is found in the cytoplasm. The enzyme catalyses L-threonine + NAD(+) = (2S)-2-amino-3-oxobutanoate + NADH + H(+). Its pathway is amino-acid degradation; L-threonine degradation via oxydo-reductase pathway; glycine from L-threonine: step 1/2. In terms of biological role, catalyzes the NAD(+)-dependent oxidation of L-threonine to 2-amino-3-ketobutyrate. This Burkholderia ambifaria (strain MC40-6) protein is L-threonine 3-dehydrogenase.